The primary structure comprises 211 residues: Pyridoxine/pyridoxamine 5'-phosphate oxidase (211 aa).

Substrate contacts are provided by residues 7-10 (RREY) and Lys65. FMN contacts are provided by residues 60–65 (RTVLLK), 75–76 (YT), Arg81, Lys82, and Gln104. Positions 122, 126, and 130 each coordinate substrate. Residues 139 to 140 (QS) and Trp184 contribute to the FMN site. Residue 190–192 (RLH) coordinates substrate. Residue Arg194 coordinates FMN.

This sequence belongs to the pyridoxamine 5'-phosphate oxidase family. In terms of assembly, homodimer. The cofactor is FMN.

It carries out the reaction pyridoxamine 5'-phosphate + O2 + H2O = pyridoxal 5'-phosphate + H2O2 + NH4(+). The enzyme catalyses pyridoxine 5'-phosphate + O2 = pyridoxal 5'-phosphate + H2O2. The protein operates within cofactor metabolism; pyridoxal 5'-phosphate salvage; pyridoxal 5'-phosphate from pyridoxamine 5'-phosphate: step 1/1. Its pathway is cofactor metabolism; pyridoxal 5'-phosphate salvage; pyridoxal 5'-phosphate from pyridoxine 5'-phosphate: step 1/1. Its function is as follows. Catalyzes the oxidation of either pyridoxine 5'-phosphate (PNP) or pyridoxamine 5'-phosphate (PMP) into pyridoxal 5'-phosphate (PLP). This chain is Pyridoxine/pyridoxamine 5'-phosphate oxidase, found in Aeromonas hydrophila subsp. hydrophila (strain ATCC 7966 / DSM 30187 / BCRC 13018 / CCUG 14551 / JCM 1027 / KCTC 2358 / NCIMB 9240 / NCTC 8049).